We begin with the raw amino-acid sequence, 93 residues long: Integration host factor subunit beta (93 aa).

It belongs to the bacterial histone-like protein family. In terms of assembly, heterodimer of an alpha and a beta chain.

In terms of biological role, this protein is one of the two subunits of integration host factor, a specific DNA-binding protein that functions in genetic recombination as well as in transcriptional and translational control. The protein is Integration host factor subunit beta of Aliivibrio salmonicida (strain LFI1238) (Vibrio salmonicida (strain LFI1238)).